The chain runs to 129 residues: Lysozyme C (129 aa).

In terms of domain architecture, C-type lysozyme spans 1–129; that stretch reads KVYGRCELAA…VNAWTRGCRL (129 aa). Disulfide bonds link C6–C127, C30–C115, C64–C80, and C76–C94. Active-site residues include E35 and D52.

The protein belongs to the glycosyl hydrolase 22 family. As to quaternary structure, monomer.

It is found in the secreted. The enzyme catalyses Hydrolysis of (1-&gt;4)-beta-linkages between N-acetylmuramic acid and N-acetyl-D-glucosamine residues in a peptidoglycan and between N-acetyl-D-glucosamine residues in chitodextrins.. Functionally, lysozymes have primarily a bacteriolytic function; those in tissues and body fluids are associated with the monocyte-macrophage system and enhance the activity of immunoagents. The polypeptide is Lysozyme C (LYZ) (Chrysolophus amherstiae (Lady Amherst's pheasant)).